Reading from the N-terminus, the 382-residue chain is Lipid-A-disaccharide synthase (382 aa).

This sequence belongs to the LpxB family.

The enzyme catalyses a lipid X + a UDP-2-N,3-O-bis[(3R)-3-hydroxyacyl]-alpha-D-glucosamine = a lipid A disaccharide + UDP + H(+). It participates in bacterial outer membrane biogenesis; LPS lipid A biosynthesis. Functionally, condensation of UDP-2,3-diacylglucosamine and 2,3-diacylglucosamine-1-phosphate to form lipid A disaccharide, a precursor of lipid A, a phosphorylated glycolipid that anchors the lipopolysaccharide to the outer membrane of the cell. This Koribacter versatilis (strain Ellin345) protein is Lipid-A-disaccharide synthase.